A 207-amino-acid chain; its full sequence is Small ribosomal subunit protein uS4 (207 aa).

Residues 20–45 form a disordered region; it reads TPKAARYMEKRPYAPGEHGRTKRKAD. The S4 RNA-binding domain maps to 93 to 158; that stretch reads MRLDALVLRA…TEPFQVAAAG (66 aa).

Belongs to the universal ribosomal protein uS4 family. Part of the 30S ribosomal subunit. Contacts protein S5. The interaction surface between S4 and S5 is involved in control of translational fidelity.

Its function is as follows. One of the primary rRNA binding proteins, it binds directly to 16S rRNA where it nucleates assembly of the body of the 30S subunit. With S5 and S12 plays an important role in translational accuracy. In Leifsonia xyli subsp. xyli (strain CTCB07), this protein is Small ribosomal subunit protein uS4.